The chain runs to 424 residues: L-glutamine:scyllo-inosose aminotransferase (424 aa).

Residues 1-21 form a disordered region; the sequence is MDSSLAISGGPRLSNREWPRW. N6-(pyridoxal phosphate)lysine is present on Lys202.

It belongs to the DegT/DnrJ/EryC1 family. L-glutamine:2-deoxy-scyllo-inosose/scyllo-inosose aminotransferase subfamily. Homodimer. Requires pyridoxal 5'-phosphate as cofactor.

The enzyme catalyses scyllo-inosose + L-glutamine = 1-amino-1-deoxy-scyllo-inositol + 2-oxoglutaramate. The protein operates within antibiotic biosynthesis; streptomycin biosynthesis. Catalyzes the PLP-dependent transamination of scyllo-inosose to form scyllo-inosamine. The polypeptide is L-glutamine:scyllo-inosose aminotransferase (stsC) (Streptomyces griseus).